We begin with the raw amino-acid sequence, 552 residues long: (R)-mandelonitrile lyase-like (552 aa).

An N-terminal signal peptide occupies residues 1 to 28 (MTKRIDSSLLYTALVVLLLLGVVHRSNA). Asparagine 44 carries an N-linked (GlcNAc...) asparagine glycan. 55-82 (DYIIVGGGTAGCPLAATLSQSFRVLLLE) contributes to the FAD binding site. N-linked (GlcNAc...) asparagine glycosylation is found at asparagine 162, asparagine 259, and asparagine 434. Histidine 492 serves as the catalytic Proton acceptor.

This sequence belongs to the GMC oxidoreductase family. Monomer. FAD is required as a cofactor. Glycosylated.

It catalyses the reaction (R)-mandelonitrile = benzaldehyde + hydrogen cyanide. The chain is (R)-mandelonitrile lyase-like from Arabidopsis thaliana (Mouse-ear cress).